A 385-amino-acid polypeptide reads, in one-letter code: Putative RNA methyltransferase YpsC (385 aa).

One can recognise a THUMP domain in the interval 44–156 (AICRANLWLR…KDQALITLDS (113 aa)).

It belongs to the methyltransferase superfamily. As to quaternary structure, interacts with the RNA polymerase core.

This chain is Putative RNA methyltransferase YpsC (ypsC), found in Bacillus subtilis (strain 168).